An 827-amino-acid polypeptide reads, in one-letter code: Periplasmic nitrate reductase (827 aa).

Positions 1 to 32 form a signal peptide, tat-type signal; that stretch reads MELNRRDFMKANAAMAAAAAAGMTIPVKNVYA. The 4Fe-4S Mo/W bis-MGD-type domain occupies 37 to 93; sequence IRWDKAPCRFCGTGCSVLVGTKDGRVVATQGDPDAEVNRGLNCIKGYFLSKIMYGAD. [4Fe-4S] cluster-binding residues include C44, C47, C51, and C79. Mo-bis(molybdopterin guanine dinucleotide) contacts are provided by residues K81, Q148, N173, C177, 210 to 217, 241 to 245, M371, Q375, N481, 507 to 508, K530, D557, and 717 to 726; these read WGSNMAEM, STFEH, SD, and TGRVLEHWHT. Substrate is bound at residue F793. Mo-bis(molybdopterin guanine dinucleotide) is bound by residues N801 and K818.

It belongs to the prokaryotic molybdopterin-containing oxidoreductase family. NasA/NapA/NarB subfamily. As to quaternary structure, component of the periplasmic nitrate reductase NapAB complex composed of NapA and NapB. Requires [4Fe-4S] cluster as cofactor. The cofactor is Mo-bis(molybdopterin guanine dinucleotide). Predicted to be exported by the Tat system. The position of the signal peptide cleavage has not been experimentally proven.

Its subcellular location is the periplasm. The catalysed reaction is 2 Fe(II)-[cytochrome] + nitrate + 2 H(+) = 2 Fe(III)-[cytochrome] + nitrite + H2O. In terms of biological role, catalytic subunit of the periplasmic nitrate reductase complex NapAB. Receives electrons from NapB and catalyzes the reduction of nitrate to nitrite. The protein is Periplasmic nitrate reductase of Actinobacillus pleuropneumoniae serotype 7 (strain AP76).